We begin with the raw amino-acid sequence, 597 residues long: Probable translation initiation factor IF-2 (597 aa).

The tr-type G domain maps to 8-225; the sequence is LRQPIVVVLG…LLAGLTQQYL (218 aa). The G1 stretch occupies residues 17-24; sequence GHVDHGKT. 17–24 lines the GTP pocket; the sequence is GHVDHGKT. Residues 42–46 form a G2 region; that stretch reads EMTQE. Positions 81-84 are G3; it reads DTPG. Residues 81 to 85 and 135 to 138 contribute to the GTP site; these read DTPGH and NKID. The G4 stretch occupies residues 135–138; that stretch reads NKID. A G5 region spans residues 203 to 205; the sequence is SGK.

This sequence belongs to the TRAFAC class translation factor GTPase superfamily. Classic translation factor GTPase family. IF-2 subfamily.

Functionally, function in general translation initiation by promoting the binding of the formylmethionine-tRNA to ribosomes. Seems to function along with eIF-2. This chain is Probable translation initiation factor IF-2, found in Metallosphaera sedula (strain ATCC 51363 / DSM 5348 / JCM 9185 / NBRC 15509 / TH2).